Reading from the N-terminus, the 565-residue chain is MKMRPRYSVIASAVSLGFVLSKSVMALGQPDTGSLNRELEQRQIQSEAKPSGELFNQTANSPYTAQYKQGLKFPLTQVQILDRNNQEVVTDELAHILKNYVGKEVSLSDLSNLANEISEFYRHNNYLVAKAILPPQEIEQGTVKILLLKGNVGEIRLQNHSALSNKFVSRLSNTTVNTSEFILKDELEKFALTINDVPGVNAGLQLSAGKKVGEANLLIKINDAKRFSSYVSVDNQGNKYTGRYRLAAGTKVSNLNGWGDELKLDLMSSNQANLKNARIDYSSLIDGYSTRFGVTANYLDYKLGGNFKSLQSQGHSHTLGAYLLHPTIRTPNFRLSTKVSFNHQNLTDKQQAVYVKQKRKINSLTAGIDGSWNLIKDGTTYFSLSTLFGNLANQTSEKKHNAVENFQPKSHFTVYNYRLSHEQILPKSFAFNIGINGQFADKTLESSQKMLLGGLSGVRGHQAGAASVDEGHLIQTEFKHYLPVFSQSVLVSSLFYDYGLGKYYKNSQFLEQGVKNSVKLQSVGAGLSLSDAGSYAINVSVAKPLDNNINNADKHQFWLSMIKTF.

The signal sequence occupies residues methionine 1–alanine 26. One can recognise a POTRA domain in the interval phenylalanine 73–glycine 150.

The protein belongs to the TPS (TC 1.B.20) family.

It is found in the cell outer membrane. Functionally, likely functions in the release of soluble HxuA from the cell. Its function is as follows. Probable member of a two partner secretion pathway (TPS) in which it mediates the secretion of HuxA. This is Heme/hemopexin transporter protein HuxB (hxuB) from Haemophilus influenzae.